Here is a 301-residue protein sequence, read N- to C-terminus: Probable alpha-L-glutamate ligase (301 aa).

The 184-residue stretch at 104–287 (LQLLSRKGIG…VAGLIYEFIE (184 aa)) folds into the ATP-grasp domain. ATP is bound by residues Lys-141, 178–179 (EF), Asp-187, and 211–213 (RSN). 3 residues coordinate Mg(2+): Asp-248, Glu-260, and Asn-262. Mn(2+) contacts are provided by Asp-248, Glu-260, and Asn-262.

It belongs to the RimK family. Requires Mg(2+) as cofactor. Mn(2+) serves as cofactor.

This Shewanella loihica (strain ATCC BAA-1088 / PV-4) protein is Probable alpha-L-glutamate ligase.